The following is a 285-amino-acid chain: Glycine--tRNA ligase alpha subunit (285 aa).

This sequence belongs to the class-II aminoacyl-tRNA synthetase family. As to quaternary structure, tetramer of two alpha and two beta subunits.

Its subcellular location is the cytoplasm. It catalyses the reaction tRNA(Gly) + glycine + ATP = glycyl-tRNA(Gly) + AMP + diphosphate. The chain is Glycine--tRNA ligase alpha subunit from Granulibacter bethesdensis (strain ATCC BAA-1260 / CGDNIH1).